The sequence spans 334 residues: Glyceraldehyde-3-phosphate dehydrogenase (334 aa).

NAD(+) is bound by residues 12–13 (TI) and Gly111. D-glyceraldehyde 3-phosphate is bound at residue 140-142 (SCN). Cys141 (nucleophile) is an active-site residue. Arg167 provides a ligand contact to NAD(+). 192 to 193 (HG) contacts D-glyceraldehyde 3-phosphate. Gln298 lines the NAD(+) pocket.

It belongs to the glyceraldehyde-3-phosphate dehydrogenase family. In terms of assembly, homotetramer.

The protein resides in the cytoplasm. It catalyses the reaction D-glyceraldehyde 3-phosphate + phosphate + NADP(+) = (2R)-3-phospho-glyceroyl phosphate + NADPH + H(+). The enzyme catalyses D-glyceraldehyde 3-phosphate + phosphate + NAD(+) = (2R)-3-phospho-glyceroyl phosphate + NADH + H(+). It functions in the pathway carbohydrate degradation; glycolysis; pyruvate from D-glyceraldehyde 3-phosphate: step 1/5. The sequence is that of Glyceraldehyde-3-phosphate dehydrogenase (gap) from Pyrococcus abyssi (strain GE5 / Orsay).